We begin with the raw amino-acid sequence, 108 residues long: Nitrite reductase (NADH) small subunit (108 aa).

This sequence to B.subtilis NasE. As to quaternary structure, associates with NirB.

The protein resides in the cytoplasm. It catalyses the reaction NH4(+) + 3 NAD(+) + 2 H2O = nitrite + 3 NADH + 5 H(+). Functionally, required for activity of the reductase. In Escherichia coli O157:H7, this protein is Nitrite reductase (NADH) small subunit (nirD).